We begin with the raw amino-acid sequence, 117 residues long: ATP-dependent Clp protease adapter protein ClpS 1 (117 aa).

A disordered region spans residues 1–33 (MIAMPVRMQQGSEGDGGGPSRGTSVITRTKPKT).

Belongs to the ClpS family. Binds to the N-terminal domain of the chaperone ClpA.

Involved in the modulation of the specificity of the ClpAP-mediated ATP-dependent protein degradation. The chain is ATP-dependent Clp protease adapter protein ClpS 1 from Rhizobium meliloti (strain 1021) (Ensifer meliloti).